Consider the following 881-residue polypeptide: Alanine--tRNA ligase (881 aa).

Positions 566, 570, 668, and 672 each coordinate Zn(2+).

It belongs to the class-II aminoacyl-tRNA synthetase family. Zn(2+) serves as cofactor.

The protein localises to the cytoplasm. It carries out the reaction tRNA(Ala) + L-alanine + ATP = L-alanyl-tRNA(Ala) + AMP + diphosphate. Its function is as follows. Catalyzes the attachment of alanine to tRNA(Ala) in a two-step reaction: alanine is first activated by ATP to form Ala-AMP and then transferred to the acceptor end of tRNA(Ala). Also edits incorrectly charged Ser-tRNA(Ala) and Gly-tRNA(Ala) via its editing domain. The sequence is that of Alanine--tRNA ligase from Frankia alni (strain DSM 45986 / CECT 9034 / ACN14a).